A 473-amino-acid polypeptide reads, in one-letter code: Siroheme synthase (473 aa).

The segment at 1 to 206 (MDYLPIFMKI…GNTGEAEALL (206 aa)) is precorrin-2 dehydrogenase /sirohydrochlorin ferrochelatase. Residues 22–23 (TV) and 43–44 (PK) each bind NAD(+). The segment at 223 to 473 (GEVYIIGAGP…KSLLDDRVPA (251 aa)) is uroporphyrinogen-III C-methyltransferase. Position 232 (Pro232) interacts with S-adenosyl-L-methionine. Catalysis depends on Asp255, which acts as the Proton acceptor. Lys277 (proton donor) is an active-site residue. S-adenosyl-L-methionine-binding positions include 308-310 (GGD), Ile313, 338-339 (TA), Met390, and Gly419.

In the N-terminal section; belongs to the precorrin-2 dehydrogenase / sirohydrochlorin ferrochelatase family. This sequence in the C-terminal section; belongs to the precorrin methyltransferase family.

The enzyme catalyses uroporphyrinogen III + 2 S-adenosyl-L-methionine = precorrin-2 + 2 S-adenosyl-L-homocysteine + H(+). It catalyses the reaction precorrin-2 + NAD(+) = sirohydrochlorin + NADH + 2 H(+). The catalysed reaction is siroheme + 2 H(+) = sirohydrochlorin + Fe(2+). It participates in cofactor biosynthesis; adenosylcobalamin biosynthesis; precorrin-2 from uroporphyrinogen III: step 1/1. It functions in the pathway cofactor biosynthesis; adenosylcobalamin biosynthesis; sirohydrochlorin from precorrin-2: step 1/1. Its pathway is porphyrin-containing compound metabolism; siroheme biosynthesis; precorrin-2 from uroporphyrinogen III: step 1/1. The protein operates within porphyrin-containing compound metabolism; siroheme biosynthesis; siroheme from sirohydrochlorin: step 1/1. It participates in porphyrin-containing compound metabolism; siroheme biosynthesis; sirohydrochlorin from precorrin-2: step 1/1. Functionally, multifunctional enzyme that catalyzes the SAM-dependent methylations of uroporphyrinogen III at position C-2 and C-7 to form precorrin-2 via precorrin-1. Then it catalyzes the NAD-dependent ring dehydrogenation of precorrin-2 to yield sirohydrochlorin. Finally, it catalyzes the ferrochelation of sirohydrochlorin to yield siroheme. The protein is Siroheme synthase of Hydrogenovibrio crunogenus (strain DSM 25203 / XCL-2) (Thiomicrospira crunogena).